A 337-amino-acid polypeptide reads, in one-letter code: Ketol-acid reductoisomerase (NADP(+)) (337 aa).

The region spanning 3–183 is the KARI N-terminal Rossmann domain; that stretch reads IELLYDADAD…GGARAGVIPT (181 aa). NADP(+) is bound by residues 26-29, arginine 49, serine 52, serine 54, and 84-87; these read YGSQ and DTSQ. Histidine 109 is an active-site residue. NADP(+) is bound at residue glycine 135. In terms of domain architecture, KARI C-terminal knotted spans 184–329; it reads TFREETETDL…SKLRDLMSWV (146 aa). 4 residues coordinate Mg(2+): aspartate 192, glutamate 196, glutamate 228, and glutamate 232. Serine 253 lines the substrate pocket.

Belongs to the ketol-acid reductoisomerase family. The cofactor is Mg(2+).

The catalysed reaction is (2R)-2,3-dihydroxy-3-methylbutanoate + NADP(+) = (2S)-2-acetolactate + NADPH + H(+). It catalyses the reaction (2R,3R)-2,3-dihydroxy-3-methylpentanoate + NADP(+) = (S)-2-ethyl-2-hydroxy-3-oxobutanoate + NADPH + H(+). Its pathway is amino-acid biosynthesis; L-isoleucine biosynthesis; L-isoleucine from 2-oxobutanoate: step 2/4. The protein operates within amino-acid biosynthesis; L-valine biosynthesis; L-valine from pyruvate: step 2/4. Involved in the biosynthesis of branched-chain amino acids (BCAA). Catalyzes an alkyl-migration followed by a ketol-acid reduction of (S)-2-acetolactate (S2AL) to yield (R)-2,3-dihydroxy-isovalerate. In the isomerase reaction, S2AL is rearranged via a Mg-dependent methyl migration to produce 3-hydroxy-3-methyl-2-ketobutyrate (HMKB). In the reductase reaction, this 2-ketoacid undergoes a metal-dependent reduction by NADPH to yield (R)-2,3-dihydroxy-isovalerate. The protein is Ketol-acid reductoisomerase (NADP(+)) of Corynebacterium diphtheriae (strain ATCC 700971 / NCTC 13129 / Biotype gravis).